Here is a 215-residue protein sequence, read N- to C-terminus: Holliday junction branch migration complex subunit RuvA (215 aa).

The segment at 1-67 (MIGWLQGERI…DDGSTLFGFC (67 aa)) is domain I. The segment at 68–146 (DQQERDLFRT…NWAPLQEPSL (79 aa)) is domain II. Residues 147 to 158 (SLVDRSDVKAIP) form a flexible linker region. The interval 159–215 (LGEPCLRDLQITLETLGYEDLEIRRAMRAVASGPDVPAEDDGDAWLRASLKWLSQSA) is domain III.

This sequence belongs to the RuvA family. As to quaternary structure, homotetramer. Forms an RuvA(8)-RuvB(12)-Holliday junction (HJ) complex. HJ DNA is sandwiched between 2 RuvA tetramers; dsDNA enters through RuvA and exits via RuvB. An RuvB hexamer assembles on each DNA strand where it exits the tetramer. Each RuvB hexamer is contacted by two RuvA subunits (via domain III) on 2 adjacent RuvB subunits; this complex drives branch migration. In the full resolvosome a probable DNA-RuvA(4)-RuvB(12)-RuvC(2) complex forms which resolves the HJ.

It localises to the cytoplasm. Functionally, the RuvA-RuvB-RuvC complex processes Holliday junction (HJ) DNA during genetic recombination and DNA repair, while the RuvA-RuvB complex plays an important role in the rescue of blocked DNA replication forks via replication fork reversal (RFR). RuvA specifically binds to HJ cruciform DNA, conferring on it an open structure. The RuvB hexamer acts as an ATP-dependent pump, pulling dsDNA into and through the RuvAB complex. HJ branch migration allows RuvC to scan DNA until it finds its consensus sequence, where it cleaves and resolves the cruciform DNA. In Synechococcus sp. (strain WH7803), this protein is Holliday junction branch migration complex subunit RuvA.